Reading from the N-terminus, the 414-residue chain is 3-oxo-tetronate kinase (414 aa).

Residues S255, 355–358 (GGET), and G398 each bind ATP.

It belongs to the four-carbon acid sugar kinase family.

It carries out the reaction 3-dehydro-L-erythronate + ATP = 3-dehydro-4-O-phospho-L-erythronate + ADP + H(+). It catalyses the reaction 3-dehydro-D-erythronate + ATP = 3-dehydro-4-O-phospho-D-erythronate + ADP + H(+). In terms of biological role, catalyzes the ATP-dependent phosphorylation of 3-oxo-tetronate to 3-oxo-tetronate 4-phosphate. This chain is 3-oxo-tetronate kinase, found in Actinobacillus succinogenes (strain ATCC 55618 / DSM 22257 / CCUG 43843 / 130Z).